Here is a 774-residue protein sequence, read N- to C-terminus: Lysyl oxidase homolog 2 (774 aa).

The signal sequence occupies residues 1–25 (MERPLCSHLCSCLAMLALLSPLSLA). 4 consecutive SRCR domains span residues 58 to 159 (LRLA…VVCS), 188 to 302 (IRAI…VSCV), 326 to 425 (VRLR…VRCN), and 435 to 544 (LRLN…VACS). 9 cysteine pairs are disulfide-bonded: C84–C148, C97–C158, C128–C138, C218–C291, C231–C301, C265–C275, C351–C414, C364–C424, and C395–C405. N288 carries N-linked (GlcNAc...) asparagine glycosylation. N455 carries an N-linked (GlcNAc...) (complex) asparagine glycan. 3 disulfides stabilise this stretch: C464/C530, C477/C543, and C511/C521. The segment at 548 to 751 (PDLVLNAEMV…WMYNCHIGGS (204 aa)) is lysyl-oxidase like. Ca(2+) contacts are provided by D549 and L550. 4 disulfides stabilise this stretch: C573-C625, C579-C695, C657-C673, and C663-C685. Cu cation is bound by residues H626, H628, and H630. Residue N644 is glycosylated (N-linked (GlcNAc...) (complex) asparagine). The segment at residues 653–689 (KASFCLEDTECEGDIQKNYECANFGDQGITMGCWDMY) is a cross-link (lysine tyrosylquinone (Lys-Tyr)). Y689 carries the post-translational modification 2',4',5'-topaquinone. The Ca(2+) site is built by E722, D724, N727, and N728. The cysteines at positions 732 and 746 are disulfide-linked.

This sequence belongs to the lysyl oxidase family. In terms of assembly, component of some chromatin repressor complex. Interacts with SNAI1. Interacts with TAF10. Interacts with HSPA5. Interacts with EFEMP2. Cu cation serves as cofactor. Lysine tyrosylquinone residue is required as a cofactor. In terms of processing, the lysine tyrosylquinone cross-link (LTQ) is generated by condensation of the epsilon-amino group of a lysine with a topaquinone produced by oxidation of tyrosine. Post-translationally, N-glycosylated. N-glycosylation on Asn-455 and Asn-644 may be essential for proper folding and secretion; may be composed of a fucosylated carbohydrates attached to a trimannose N-linked glycan core. In terms of tissue distribution, expressed in many tissues. Highest expression in reproductive tissues, placenta, uterus and prostate. In esophageal epithelium, expressed in the basal, prickle and granular cell layers. Up-regulated in a number of cancers cells and tissues.

The protein resides in the secreted. Its subcellular location is the extracellular space. The protein localises to the extracellular matrix. It is found in the basement membrane. It localises to the nucleus. The protein resides in the chromosome. Its subcellular location is the endoplasmic reticulum. It catalyses the reaction L-lysyl-[protein] + O2 + H2O = (S)-2-amino-6-oxohexanoyl-[protein] + H2O2 + NH4(+). According to some reports, it is inhibited by beta-aminopropionitrile (BAPN). According to another report, it is not inhibited by beta-aminopropionitrile (BAPN). Specifically inhibited by a mouse monoclonal antibody AB0023, inhibition occurs in a non-competitive manner. Its function is as follows. Mediates the post-translational oxidative deamination of lysine residues on target proteins leading to the formation of deaminated lysine (allysine). Acts as a transcription corepressor and specifically mediates deamination of trimethylated 'Lys-4' of histone H3 (H3K4me3), a specific tag for epigenetic transcriptional activation. Shows no activity against histone H3 when it is trimethylated on 'Lys-9' (H3K9me3) or 'Lys-27' (H3K27me3) or when 'Lys-4' is monomethylated (H3K4me1) or dimethylated (H3K4me2). Also mediates deamination of methylated TAF10, a member of the transcription factor IID (TFIID) complex, which induces release of TAF10 from promoters, leading to inhibition of TFIID-dependent transcription. LOXL2-mediated deamination of TAF10 results in transcriptional repression of genes required for embryonic stem cell pluripotency including POU5F1/OCT4, NANOG, KLF4 and SOX2. Involved in epithelial to mesenchymal transition (EMT) via interaction with SNAI1 and participates in repression of E-cadherin CDH1, probably by mediating deamination of histone H3. During EMT, involved with SNAI1 in negatively regulating pericentromeric heterochromatin transcription. SNAI1 recruits LOXL2 to pericentromeric regions to oxidize histone H3 and repress transcription which leads to release of heterochromatin component CBX5/HP1A, enabling chromatin reorganization and acquisition of mesenchymal traits. Interacts with the endoplasmic reticulum protein HSPA5 which activates the IRE1-XBP1 pathway of the unfolded protein response, leading to expression of several transcription factors involved in EMT and subsequent EMT induction. Involved in E-cadherin repression following hypoxia, a hallmark of EMT believed to amplify tumor aggressiveness, suggesting that it may play a role in tumor progression. When secreted into the extracellular matrix, promotes cross-linking of extracellular matrix proteins by mediating oxidative deamination of peptidyl lysine residues in precursors to fibrous collagen and elastin. Acts as a regulator of sprouting angiogenesis, probably via collagen IV scaffolding. Acts as a regulator of chondrocyte differentiation, probably by regulating expression of factors that control chondrocyte differentiation. This is Lysyl oxidase homolog 2 (LOXL2) from Homo sapiens (Human).